A 368-amino-acid chain; its full sequence is Phosphoribosylformylglycinamidine cyclo-ligase (368 aa).

This sequence belongs to the AIR synthase family.

It is found in the cytoplasm. The enzyme catalyses 2-formamido-N(1)-(5-O-phospho-beta-D-ribosyl)acetamidine + ATP = 5-amino-1-(5-phospho-beta-D-ribosyl)imidazole + ADP + phosphate + H(+). The protein operates within purine metabolism; IMP biosynthesis via de novo pathway; 5-amino-1-(5-phospho-D-ribosyl)imidazole from N(2)-formyl-N(1)-(5-phospho-D-ribosyl)glycinamide: step 2/2. In Novosphingobium aromaticivorans (strain ATCC 700278 / DSM 12444 / CCUG 56034 / CIP 105152 / NBRC 16084 / F199), this protein is Phosphoribosylformylglycinamidine cyclo-ligase.